A 469-amino-acid polypeptide reads, in one-letter code: Alpha-2C adrenergic receptor (469 aa).

Residues 1–29 (MDLQLTTNSTDSGDRGGSSNESLQRQPPS) are disordered. The Extracellular segment spans residues 1 to 36 (MDLQLTTNSTDSGDRGGSSNESLQRQPPSQYSPAEV). Asparagine 8 and asparagine 20 each carry an N-linked (GlcNAc...) asparagine glycan. The helical transmembrane segment at 37–62 (AGLAAVVSFLIVFTIVGNVLVVIAVL) threads the bilayer. Residues 63-73 (TSRALKAPQNL) lie on the Cytoplasmic side of the membrane. A helical transmembrane segment spans residues 74–99 (FQVSLASADILVATLVMPFSLANELM). Over 100 to 109 (NYWYFGKVWC) the chain is Extracellular. Cysteines 109 and 187 form a disulfide. The chain crosses the membrane as a helical span at residues 110 to 132 (VIYLALDVLFCTSSIVHLCAISL). The Cytoplasmic portion of the chain corresponds to 133-154 (DRYWSVTQAVEYNLKRTPRRIK). The chain crosses the membrane as a helical span at residues 155–175 (GIIVTVWLISAVISFPPLISL). At 176 to 194 (YRDPEDDLYPQCELNDETW) the chain is on the extracellular side. Residues 195–216 (YILSSCIGSFFAPCIIMVLVYV) form a helical membrane-spanning segment. Residues 217–386 (RIYRVAKLRT…RKVTQAREKR (170 aa)) lie on the Cytoplasmic side of the membrane. Disordered stretches follow at residues 232 to 261 (KRTV…AAAA) and 279 to 353 (HHHH…SRLS). Positions 279–296 (HHHHHLHHHHHHHHHQLR) are enriched in basic residues. The segment covering 301–310 (LEDIELEESS) has biased composition (acidic residues). Low complexity predominate over residues 331–353 (RGFSFSFSSTKGGQSAGAGSRLS). Residues 387–407 (FTFVLAVVMGVFVVCWFPFFF) form a helical membrane-spanning segment. Over 408 to 427 (TYSLYGICREACQVPETLFK) the chain is Extracellular. A helical transmembrane segment spans residues 428–448 (FFFWIGYCNSSLNPVIYTIFN). Topologically, residues 449–469 (QDFRRSFKHILFKKKKKTSLQ) are cytoplasmic.

This sequence belongs to the G-protein coupled receptor 1 family. Adrenergic receptor subfamily. ADRA2C sub-subfamily.

It localises to the cell membrane. Its function is as follows. Alpha-2 adrenergic receptors mediate the catecholamine-induced inhibition of adenylate cyclase through the action of G proteins. In Didelphis virginiana (North American opossum), this protein is Alpha-2C adrenergic receptor (ADRA2C).